We begin with the raw amino-acid sequence, 444 residues long: Probable D-serine dehydratase (444 aa).

The residue at position 118 (K118) is an N6-(pyridoxal phosphate)lysine.

The protein belongs to the serine/threonine dehydratase family. DsdA subfamily. Requires pyridoxal 5'-phosphate as cofactor.

The enzyme catalyses D-serine = pyruvate + NH4(+). The sequence is that of Probable D-serine dehydratase from Acinetobacter baumannii (strain AB0057).